Consider the following 364-residue polypeptide: Tubulin alpha-2 chain (364 aa).

Residues G59, T60, T94, N121, and N144 each contribute to the GTP site. E170 is an active-site residue.

It belongs to the tubulin family. As to quaternary structure, dimer of alpha and beta chains. A typical microtubule is a hollow water-filled tube with an outer diameter of 25 nm and an inner diameter of 15 nM. Alpha-beta heterodimers associate head-to-tail to form protofilaments running lengthwise along the microtubule wall with the beta-tubulin subunit facing the microtubule plus end conferring a structural polarity. Microtubules usually have 13 protofilaments but different protofilament numbers can be found in some organisms and specialized cells. The cofactor is Mg(2+). In terms of processing, undergoes a tyrosination/detyrosination cycle, the cyclic removal and re-addition of a C-terminal tyrosine residue by the enzymes tubulin tyrosine carboxypeptidase (TTCP) and tubulin tyrosine ligase (TTL), respectively.

The protein resides in the cytoplasm. It is found in the cytoskeleton. The catalysed reaction is GTP + H2O = GDP + phosphate + H(+). In terms of biological role, tubulin is the major constituent of microtubules, a cylinder consisting of laterally associated linear protofilaments composed of alpha- and beta-tubulin heterodimers. Microtubules grow by the addition of GTP-tubulin dimers to the microtubule end, where a stabilizing cap forms. Below the cap, tubulin dimers are in GDP-bound state, owing to GTPase activity of alpha-tubulin. This is Tubulin alpha-2 chain (TUBA2) from Anemia phyllitidis (Fern).